Here is a 312-residue protein sequence, read N- to C-terminus: D-alanine--D-alanine ligase (312 aa).

In terms of domain architecture, ATP-grasp spans 102-307; that stretch reads KKIFKMEGIP…FPELTDRLIK (206 aa). 136-191 provides a ligand contact to ATP; sequence IKEVGVPAVVKANTQGSTIGITFVHVKEKMAEAIESALKYDQDVLVEQFVAGTEVT. The Mg(2+) site is built by Asp-262, Glu-274, and Asn-276.

It belongs to the D-alanine--D-alanine ligase family. Mg(2+) serves as cofactor. Requires Mn(2+) as cofactor.

It is found in the cytoplasm. It catalyses the reaction 2 D-alanine + ATP = D-alanyl-D-alanine + ADP + phosphate + H(+). It functions in the pathway cell wall biogenesis; peptidoglycan biosynthesis. In terms of biological role, cell wall formation. The polypeptide is D-alanine--D-alanine ligase (Desulforamulus reducens (strain ATCC BAA-1160 / DSM 100696 / MI-1) (Desulfotomaculum reducens)).